The primary structure comprises 226 residues: Orotate phosphoribosyltransferase 1 (226 aa).

Lys30 is a 5-phospho-alpha-D-ribose 1-diphosphate binding site. Residue 38-39 (FF) coordinates orotate. Residues 76–77 (YK), Arg106, Lys107, Lys110, His112, and 132–140 (DDVMTAGTA) each bind 5-phospho-alpha-D-ribose 1-diphosphate. The orotate site is built by Thr136 and Arg164. 2 positions are modified to phosphoserine: Ser213 and Ser225.

The protein belongs to the purine/pyrimidine phosphoribosyltransferase family. PyrE subfamily. As to quaternary structure, homodimer.

The catalysed reaction is orotidine 5'-phosphate + diphosphate = orotate + 5-phospho-alpha-D-ribose 1-diphosphate. The protein operates within pyrimidine metabolism; UMP biosynthesis via de novo pathway; UMP from orotate: step 1/2. Functionally, catalyzes the transfer of a ribosyl phosphate group from 5-phosphoribose 1-diphosphate to orotate, leading to the formation of orotidine monophosphate (OMP). The polypeptide is Orotate phosphoribosyltransferase 1 (URA5) (Saccharomyces cerevisiae (strain ATCC 204508 / S288c) (Baker's yeast)).